A 255-amino-acid polypeptide reads, in one-letter code: Imidazole glycerol phosphate synthase subunit HisF (255 aa).

Catalysis depends on residues Asp-11 and Asp-130.

Belongs to the HisA/HisF family. As to quaternary structure, heterodimer of HisH and HisF.

Its subcellular location is the cytoplasm. The catalysed reaction is 5-[(5-phospho-1-deoxy-D-ribulos-1-ylimino)methylamino]-1-(5-phospho-beta-D-ribosyl)imidazole-4-carboxamide + L-glutamine = D-erythro-1-(imidazol-4-yl)glycerol 3-phosphate + 5-amino-1-(5-phospho-beta-D-ribosyl)imidazole-4-carboxamide + L-glutamate + H(+). The protein operates within amino-acid biosynthesis; L-histidine biosynthesis; L-histidine from 5-phospho-alpha-D-ribose 1-diphosphate: step 5/9. Functionally, IGPS catalyzes the conversion of PRFAR and glutamine to IGP, AICAR and glutamate. The HisF subunit catalyzes the cyclization activity that produces IGP and AICAR from PRFAR using the ammonia provided by the HisH subunit. This is Imidazole glycerol phosphate synthase subunit HisF from Syntrophotalea carbinolica (strain DSM 2380 / NBRC 103641 / GraBd1) (Pelobacter carbinolicus).